The sequence spans 685 residues: Translation initiation factor IF-2 (685 aa).

Residues 185–354 (KRPPVVTVMG…LLTAEMQELK (170 aa)) form the tr-type G domain. The tract at residues 194–201 (GHVDHGKT) is G1. 194-201 (GHVDHGKT) is a GTP binding site. The segment at 219–223 (GITQH) is G2. Residues 240–243 (DTPG) are G3. Residues 240–244 (DTPGH) and 294–297 (NKMD) each bind GTP. Positions 294–297 (NKMD) are G4. The G5 stretch occupies residues 330–332 (SAH).

Belongs to the TRAFAC class translation factor GTPase superfamily. Classic translation factor GTPase family. IF-2 subfamily.

The protein localises to the cytoplasm. In terms of biological role, one of the essential components for the initiation of protein synthesis. Protects formylmethionyl-tRNA from spontaneous hydrolysis and promotes its binding to the 30S ribosomal subunits. Also involved in the hydrolysis of GTP during the formation of the 70S ribosomal complex. This Clostridium tetani (strain Massachusetts / E88) protein is Translation initiation factor IF-2.